Reading from the N-terminus, the 606-residue chain is Transmembrane 9 superfamily member 1 (606 aa).

An N-terminal signal peptide occupies residues 1 to 27; that stretch reads MTVLGHPRSWSCRWWPLLLLLLLTGRE. The N-linked (GlcNAc...) asparagine glycan is linked to N178. The next 4 helical transmembrane spans lie at 237–257, 310–330, 339–359, and 373–393; these read LSIINSMVLVFLLVGFVAVIL, VLGVGAQFLALGTGIIVMALL, GAINSAAILLYALTCCISGYV, and VWNIILTTSLFSVPFFLTWSV. An N-linked (GlcNAc...) asparagine glycan is attached at N401. The next 4 helical transmembrane spans lie at 412–432, 469–489, 499–519, and 535–555; these read ILLLLTVWLLVGFPLTVIGGI, VGGFLPFSAISVELYYIFATV, GILFFVFAILLSVGACISIAL, and SVLSVGSTGLFIFLYSVFYYA. N-linked (GlcNAc...) asparagine glycosylation occurs at N559. Residues 570 to 590 form a helical membrane-spanning segment; the sequence is FGYSLLTGYVFFLMLGTISFF.

The protein belongs to the nonaspanin (TM9SF) (TC 9.A.2) family.

It localises to the lysosome membrane. Its subcellular location is the cytoplasmic vesicle. The protein localises to the autophagosome membrane. Plays an essential role in autophagy. The sequence is that of Transmembrane 9 superfamily member 1 (TM9SF1) from Bos taurus (Bovine).